The sequence spans 244 residues: Proteasome subunit alpha type-5 (244 aa).

This sequence belongs to the peptidase T1A family. The 26S proteasome consists of a 20S proteasome core and two 19S regulatory subunits. The 20S proteasome core is composed of 28 subunits that are arranged in four stacked rings, resulting in a barrel-shaped structure. The two end rings are each formed by seven alpha subunits, and the two central rings are each formed by seven beta subunits. The catalytic chamber with the active sites is on the inside of the barrel.

Its subcellular location is the cytoplasm. It is found in the nucleus. Functionally, the proteasome is a multicatalytic proteinase complex which is characterized by its ability to cleave peptides with Arg, Phe, Tyr, Leu, and Glu adjacent to the leaving group at neutral or slightly basic pH. The proteasome has an ATP-dependent proteolytic activity. This chain is Proteasome subunit alpha type-5 (Prosalpha5), found in Drosophila melanogaster (Fruit fly).